Consider the following 715-residue polypeptide: Polyribonucleotide nucleotidyltransferase (715 aa).

Mg(2+) contacts are provided by aspartate 490 and aspartate 496. Residues 557–616 (PRIETMTIPTDKIREVIGSGGKVIREIVETSGAKVDISDDGTIKIASANADSIKKAYDMI) enclose the KH domain. The S1 motif domain occupies 626–694 (GKIYVGKVVK…DRGKVRLGMK (69 aa)).

It belongs to the polyribonucleotide nucleotidyltransferase family. It depends on Mg(2+) as a cofactor.

Its subcellular location is the cytoplasm. The catalysed reaction is RNA(n+1) + phosphate = RNA(n) + a ribonucleoside 5'-diphosphate. In terms of biological role, involved in mRNA degradation. Catalyzes the phosphorolysis of single-stranded polyribonucleotides processively in the 3'- to 5'-direction. The sequence is that of Polyribonucleotide nucleotidyltransferase from Paracoccus denitrificans (strain Pd 1222).